We begin with the raw amino-acid sequence, 267 residues long: MQLIRSSDYGFWLLSQGSHIHLVNNYLPEGRAEDFHLQGKKGMVIGELDRQPLWLVEEQPNDTRAYFDLRDQLYLPERTFNLLNRGVELNHFFKTHQFCGKCGDKTMQTEDEWAVQCTNEECNYRTYPVICPSIIVAIRRGKEILLANHRRHAPKYGKGGMYTTLAGFVEVGESFEQTIHREVFEETGIKVKNIRYFGSQPWAFPNSQMVGFLADYESGEIRLQEEEIADAKWFRYDEPYPEFPEKGTIARALIEATLKLCAEHQDK.

Substrate is bound at residue arginine 70. Residues cysteine 99 and cysteine 102 each contribute to the Zn(2+) site. Glutamate 112 is a substrate binding site. Cysteine 117 and cysteine 122 together coordinate Zn(2+). Tyrosine 127 contributes to the substrate binding site. The Nudix hydrolase domain occupies 128 to 257; the sequence is PVICPSIIVA…TIARALIEAT (130 aa). Residues alanine 166, glutamate 182, and glutamate 186 each coordinate a divalent metal cation. The Nudix box motif lies at 167–188; that stretch reads GFVEVGESFEQTIHREVFEETG. Residue 200–207 participates in substrate binding; that stretch reads QPWAFPNS. Glutamate 227 provides a ligand contact to a divalent metal cation. Alanine 250 is a substrate binding site.

The protein belongs to the Nudix hydrolase family. NudC subfamily. Homodimer. Mg(2+) serves as cofactor. Requires Mn(2+) as cofactor. The cofactor is Zn(2+).

It carries out the reaction a 5'-end NAD(+)-phospho-ribonucleoside in mRNA + H2O = a 5'-end phospho-adenosine-phospho-ribonucleoside in mRNA + beta-nicotinamide D-ribonucleotide + 2 H(+). The catalysed reaction is NAD(+) + H2O = beta-nicotinamide D-ribonucleotide + AMP + 2 H(+). It catalyses the reaction NADH + H2O = reduced beta-nicotinamide D-ribonucleotide + AMP + 2 H(+). MRNA decapping enzyme that specifically removes the nicotinamide adenine dinucleotide (NAD) cap from a subset of mRNAs by hydrolyzing the diphosphate linkage to produce nicotinamide mononucleotide (NMN) and 5' monophosphate mRNA. The NAD-cap is present at the 5'-end of some mRNAs and stabilizes RNA against 5'-processing. Has preference for mRNAs with a 5'-end purine. Catalyzes the hydrolysis of a broad range of dinucleotide pyrophosphates. This is NAD-capped RNA hydrolase NudC from Mannheimia succiniciproducens (strain KCTC 0769BP / MBEL55E).